The following is a 706-amino-acid chain: Transmembrane and coiled-coil domains protein 2 (706 aa).

Disordered regions lie at residues 1–221 and 251–280; these read MKRC…TTDT and VALSLPSGPGHGDSDGPISLDVPDGAPDPQ. S6 is subject to Phosphoserine. Residues 83–94 show a composition bias toward basic residues; that stretch reads GLKHLFHSRRRS. Residues 102-112 are compositionally biased toward low complexity; the sequence is SQEAQQQQQQQ. Basic and acidic residues predominate over residues 120 to 131; the sequence is PDEKERSPEMHR. R163 carries the post-translational modification Omega-N-methylarginine. Residues 330-365 are a coiled coil; that stretch reads KQVFEKKNQKSAQTIAQLHKKLEHYRRRLKEIEQNG. Residue S435 is modified to Phosphoserine. Residues 440–459 form a disordered region; that stretch reads AHLKDPMEDGPPEEAARALS. A phosphoserine mark is found at S461 and S467. The segment at 464-510 is disordered; sequence LVSSPKYGSDDECSSASASSAGAGSNSGAGPGGALGSPRSNTLYGAP. Over residues 477–487 the composition is skewed to low complexity; it reads SSASASSAGAG. A compositionally biased stretch (gly residues) spans 488–498; sequence SNSGAGPGGAL. Residue S500 is modified to Phosphoserine. Residues 511–630 are a coiled coil; that stretch reads GNLDTLLEEL…QQQQVVQLEG (120 aa). A run of 2 helical transmembrane segments spans residues 646 to 666 and 679 to 699; these read VILALMAVLLVFVSTIANFIT and ALLLLVLFLLWKHWASLTYLL.

This sequence belongs to the TEX28 family. As to quaternary structure, may form homodimers and heterodimers with TMCC2 or TMCC3 via the coiled-coil domains. Interacts with ribosomal proteins RPL4 and RPS6. Interacts with APOE and proteolytic processed C-terminal fragment C99 of the amyloid precursor protein (APP C99).

The protein resides in the endoplasmic reticulum membrane. Functionally, may be involved in the regulation of the proteolytic processing of the amyloid precursor protein (APP) possibly also implicating APOE. This Mus musculus (Mouse) protein is Transmembrane and coiled-coil domains protein 2.